Reading from the N-terminus, the 196-residue chain is Imidazoleglycerol-phosphate dehydratase (196 aa).

This sequence belongs to the imidazoleglycerol-phosphate dehydratase family.

The protein resides in the cytoplasm. The enzyme catalyses D-erythro-1-(imidazol-4-yl)glycerol 3-phosphate = 3-(imidazol-4-yl)-2-oxopropyl phosphate + H2O. The protein operates within amino-acid biosynthesis; L-histidine biosynthesis; L-histidine from 5-phospho-alpha-D-ribose 1-diphosphate: step 6/9. The sequence is that of Imidazoleglycerol-phosphate dehydratase from Nitratidesulfovibrio vulgaris (strain DSM 19637 / Miyazaki F) (Desulfovibrio vulgaris).